A 297-amino-acid chain; its full sequence is Large ribosomal subunit protein uL18 (297 aa).

N-acetylglycine is present on Gly2. N6-acetyllysine is present on residues Lys5 and Lys48. Ser185 is subject to Phosphoserine. Residue Lys220 is modified to N6-acetyllysine; alternate. Lys220 is covalently cross-linked (Glycyl lysine isopeptide (Lys-Gly) (interchain with G-Cter in SUMO1); alternate). Lys220 is covalently cross-linked (Glycyl lysine isopeptide (Lys-Gly) (interchain with G-Cter in SUMO2); alternate). A Phosphothreonine modification is found at Thr232. A disordered region spans residues 253-297 (YEKKPKREVKKKRWNRPKMSLAQKKDRVAQKKASFLRAQERAAES). Over residues 258–268 (KREVKKKRWNR) the composition is skewed to basic residues. Residue Ser272 is modified to Phosphoserine.

The protein belongs to the universal ribosomal protein uL18 family. As to quaternary structure, component of the large ribosomal subunit (LSU). Part of the 5S RNP complex, which is a LSU subcomplex composed of the 5S RNA, RPL5 and RPL11. Component of a hexameric 5S RNP precursor complex, composed of 5S RNA, RRS1, RPF2/BXDC1, RPL5, RPL11 and HEATR3; this complex acts as a precursor for ribosome assembly. Interacts with NVL in an ATP-dependent manner. Interacts with RRP1B. Interacts with IPO5, IPO7 and KPNB1; these interactions may be involved in RPL5 nuclear import for the assembly of ribosomal subunits.

It is found in the cytoplasm. It localises to the nucleus. The protein resides in the nucleolus. In terms of biological role, component of the ribosome, a large ribonucleoprotein complex responsible for the synthesis of proteins in the cell. The small ribosomal subunit (SSU) binds messenger RNAs (mRNAs) and translates the encoded message by selecting cognate aminoacyl-transfer RNA (tRNA) molecules. The large subunit (LSU) contains the ribosomal catalytic site termed the peptidyl transferase center (PTC), which catalyzes the formation of peptide bonds, thereby polymerizing the amino acids delivered by tRNAs into a polypeptide chain. The nascent polypeptides leave the ribosome through a tunnel in the LSU and interact with protein factors that function in enzymatic processing, targeting, and the membrane insertion of nascent chains at the exit of the ribosomal tunnel. As part of the 5S RNP/5S ribonucleoprotein particle it is an essential component of the LSU, required for its formation and the maturation of rRNAs. It also couples ribosome biogenesis to p53/TP53 activation. As part of the 5S RNP it accumulates in the nucleoplasm and inhibits MDM2, when ribosome biogenesis is perturbed, mediating the stabilization and the activation of TP53. This is Large ribosomal subunit protein uL18 (Rpl5) from Mus musculus (Mouse).